The following is a 177-amino-acid chain: ATP synthase subunit delta (177 aa).

The protein belongs to the ATPase delta chain family. F-type ATPases have 2 components, F(1) - the catalytic core - and F(0) - the membrane proton channel. F(1) has five subunits: alpha(3), beta(3), gamma(1), delta(1), epsilon(1). F(0) has three main subunits: a(1), b(2) and c(10-14). The alpha and beta chains form an alternating ring which encloses part of the gamma chain. F(1) is attached to F(0) by a central stalk formed by the gamma and epsilon chains, while a peripheral stalk is formed by the delta and b chains.

The protein localises to the cell inner membrane. Its function is as follows. F(1)F(0) ATP synthase produces ATP from ADP in the presence of a proton or sodium gradient. F-type ATPases consist of two structural domains, F(1) containing the extramembraneous catalytic core and F(0) containing the membrane proton channel, linked together by a central stalk and a peripheral stalk. During catalysis, ATP synthesis in the catalytic domain of F(1) is coupled via a rotary mechanism of the central stalk subunits to proton translocation. This protein is part of the stalk that links CF(0) to CF(1). It either transmits conformational changes from CF(0) to CF(1) or is implicated in proton conduction. This chain is ATP synthase subunit delta, found in Shewanella denitrificans (strain OS217 / ATCC BAA-1090 / DSM 15013).